The chain runs to 332 residues: L-lactate dehydrogenase A chain (332 aa).

A2 carries the N-acetylalanine modification. K5 carries the post-translational modification N6-acetyllysine; alternate. K5 bears the N6-succinyllysine; alternate mark. K14 carries the N6-acetyllysine modification. A Phosphothreonine modification is found at T18. 29–57 (GAVGMACAISILMKDLADELALVDVIEDK) is a binding site for NAD(+). K57 carries the post-translational modification N6-acetyllysine; alternate. K57 is covalently cross-linked (Glycyl lysine isopeptide (Lys-Gly) (interchain with G-Cter in SUMO2); alternate). K81 is modified (N6-acetyllysine). R99 serves as a coordination point for NAD(+). R106 is a binding site for substrate. K118 is modified (N6-acetyllysine; alternate). K118 carries the post-translational modification N6-succinyllysine; alternate. K126 carries the N6-acetyllysine modification. Positions 138 and 169 each coordinate substrate. The active-site Proton acceptor is H193. An N6-acetyllysine mark is found at K224 and K232. At Y239 the chain carries Phosphotyrosine. K243 carries the post-translational modification N6-acetyllysine. T248 lines the substrate pocket. T309 bears the Phosphothreonine mark. S310 is subject to Phosphoserine. Position 318 is an N6-acetyllysine; alternate (K318). K318 is modified (N6-succinyllysine; alternate). T322 is modified (phosphothreonine).

This sequence belongs to the LDH/MDH superfamily. LDH family. Homotetramer. Interacts with PTEN upstream reading frame protein MP31. Post-translationally, ISGylated.

It is found in the cytoplasm. It catalyses the reaction (S)-lactate + NAD(+) = pyruvate + NADH + H(+). It functions in the pathway fermentation; pyruvate fermentation to lactate; (S)-lactate from pyruvate: step 1/1. Its function is as follows. Interconverts simultaneously and stereospecifically pyruvate and lactate with concomitant interconversion of NADH and NAD(+). This Pan troglodytes (Chimpanzee) protein is L-lactate dehydrogenase A chain (LDHA).